The chain runs to 282 residues: 1-deoxy-11-beta-hydroxypentalenate dehydrogenase (282 aa).

Residue 12-36 (GAASGIGLALSARFARAGAGVVMAD) coordinates NAD(+). Substrate is bound at residue S144. Y157 (proton acceptor) is an active-site residue. K161 contacts NAD(+). The tract at residues 258 to 282 (PPPSPEEELWPVPKTTTATTATTKH) is disordered. Over residues 267-282 (WPVPKTTTATTATTKH) the composition is skewed to low complexity.

Belongs to the short-chain dehydrogenases/reductases (SDR) family.

It carries out the reaction 1-deoxy-11beta-hydroxypentalenate + NAD(+) = 1-deoxy-11-oxopentalenate + NADH + H(+). It functions in the pathway antibiotic biosynthesis; pentalenolactone biosynthesis. Functionally, catalyzes the oxidation of 1-deoxy-11-beta-hydroxypentalenic acid to 1-deoxy-11-oxopentalenic acid in the biosynthesis of pentalenolactone antibiotic. The sequence is that of 1-deoxy-11-beta-hydroxypentalenate dehydrogenase (pntF) from Streptomyces arenae.